A 630-amino-acid chain; its full sequence is MGDAPLPPGSGKEFTQVQQQHNNYSNHQQQHAFASQYDMTQQQQPFGRGLSGPYNMGLMMHALPHPSYRPGQQQQHQYGSPPNTNGNAQPMPQAHGNNTMNSMPGPPQYYMQQQHGLPPQYYAQQMQGSQQQQQHQRGSMSPRANMALYQQPHTQGQQYYYPQGAQFPNHGPMPQNSMLAGPYPLASHMQHVDHRLAQRQVGDQRDVDNTEQSQPRVDGARFESQSNVVRGPPRKPRQSGHAIWIGNLPPQTDLMSLVYHVCKEAPGLESLFLISKSNCAFANFKDEEACISAQQKIHDSKFQTVRLVSRLRKSTVEGATGLTAPTGPAASAPQSNISQEVKGDALSVVTTTEDLIASSNVSSPKVTSPAPVETDRSAPQKEKYFILKSLTVEDLEQSIKTGIWATQAHNEKALNKAYETAESVYLIFSANKSGEYFGYARMTSQINEDPAAAVEFAPKAQAASDVALPKAIPTEANEYMPKGSIMDDSERGTIFWEADPPEDADGVDSNDTTTAAVADDTVSIKSCETGGPDSKVWGKPFQIEWLSVARLPFYRTRGIRNPWNSNREVKIARDGTELEPSVGRKLTGLFTSRGVGQLQQQPHPHHHHVMGGGMPMPGGMVHGYPPMYAQ.

Disordered regions lie at residues 38 to 113, 160 to 183, and 200 to 241; these read DMTQ…YMQQ, YYPQ…AGPY, and QVGD…QSGH. The span at 70–102 shows a compositional bias: polar residues; it reads PGQQQQHQYGSPPNTNGNAQPMPQAHGNNTMNS. In terms of domain architecture, YTH spans 382 to 590; the sequence is EKYFILKSLT…SVGRKLTGLF (209 aa).

This sequence belongs to the YTHDF family. YTHDF1 subfamily.

Its subcellular location is the cytoplasm. It localises to the P-body. Its function is as follows. Specifically recognizes and binds N6-methyladenosine (m6A)-containing mRNAs, and regulates their stability. M6A is a modification present at internal sites of mRNAs and some non-coding RNAs and plays a role in mRNA stability and processing. Plays a role in pathogenicity towards plant host. The protein is YTH domain-containing family protein 1 of Pyricularia oryzae (strain 70-15 / ATCC MYA-4617 / FGSC 8958) (Rice blast fungus).